The sequence spans 70 residues: Large ribosomal subunit protein bL31 (70 aa).

Residues C16, C18, C37, and C40 each contribute to the Zn(2+) site.

Belongs to the bacterial ribosomal protein bL31 family. Type A subfamily. As to quaternary structure, part of the 50S ribosomal subunit. Requires Zn(2+) as cofactor.

Functionally, binds the 23S rRNA. This chain is Large ribosomal subunit protein bL31, found in Haemophilus influenzae (strain PittEE).